A 101-amino-acid polypeptide reads, in one-letter code: Citrate lyase acyl carrier protein (101 aa).

Ser-14 is modified (O-(phosphoribosyl dephospho-coenzyme A)serine).

The protein belongs to the CitD family. Oligomer with a subunit composition of (alpha,beta,gamma)6.

The protein localises to the cytoplasm. Functionally, covalent carrier of the coenzyme of citrate lyase. The protein is Citrate lyase acyl carrier protein of Latilactobacillus sakei subsp. sakei (strain 23K) (Lactobacillus sakei subsp. sakei).